The sequence spans 508 residues: Amphoterin-induced protein 3 (508 aa).

A signal peptide spans 1-19 (MAWLVLSGILLCMLGAGLG). Over 20–383 (TSDLEDVLPP…ARPEPETFNT (364 aa)) the chain is Extracellular. The 37-residue stretch at 25–61 (DVLPPAPHNCPDICICAADVLSCAGRGLQDLPVALPT) folds into the LRRNT domain. 2 disulfide bridges follow: Cys34-Cys40 and Cys38-Cys47. LRR repeat units lie at residues 62-83 (TAAE…WLAP), 86-107 (RLRA…AFTN), 110-133 (GLRT…DGLE), 134-155 (ELEK…AFQG), 158-178 (MLSH…NHLH), and 184-207 (RLRT…AALP). Asn107 is a glycosylation site (N-linked (GlcNAc...) asparagine). N-linked (GlcNAc...) asparagine glycosylation occurs at Asn142. An LRRCT domain is found at 219-275 (NPLPCDCSLYHLLRRWHQRGLSALHDFEREYTCLVFKVSESRVRFFEHSRVFKNCSV). 3 disulfide bridges follow: Cys223/Cys251, Cys225/Cys273, and Cys300/Cys352. Residues Asn272, Asn301, Asn362, and Asn368 are each glycosylated (N-linked (GlcNAc...) asparagine). Residues 279–370 (PGLELPEEQL…HNQTLEYNVS (92 aa)) enclose the Ig-like C2-type domain. The helical transmembrane segment at 384 to 404 (GFTTLLGCIVGLVLVLLYLFA) threads the bilayer. The Cytoplasmic portion of the chain corresponds to 405–508 (PPCRGCCHCC…STGSEGLVMS (104 aa)).

This sequence belongs to the immunoglobulin superfamily. AMIGO family. In terms of assembly, binds AMIGO1 or AMIGO2. Ubiquitous.

The protein resides in the membrane. May mediate heterophilic cell-cell interaction. May contribute to signal transduction through its intracellular domain. In Mus musculus (Mouse), this protein is Amphoterin-induced protein 3.